The primary structure comprises 995 residues: MATKLLSLTCIRKERFSERYPLVRKHLTRSRDGGGGSSSETAAFEIDDPISRAVFQVLGMTCSACAGSVEKAIKRLPGIHDAVIDALNNRAQILFYPNSVDVETIRETIEDAGFEASLIENEANERSRQVCRIRINGMTCTSCSSTIERVLQSVNGVQRAHVALAIEEAEIHYDPRLSSYDRLLEEIENAGFEAVLISTGEDVSKIDLKIDGELTDESMKVIERSLEALPGVQSVEISHGTDKISVLYKPDVTGPRNFIQVIESTVFGHSGHIKATIFSEGGVGRESQKQGEIKQYYKSFLWSLVFTVPVFLTAMVFMYIPGIKDLLMFKVINMLTVGEIIRCVLATPVQFVIGWRFYTGSYKALRRGSANMDVLIALGTNAAYFYSLYTVLRAATSPDFKGVDFFETSAMLISFIILGKYLEVMAKGKTSQAIAKLMNLAPDTAILLSLDKEGNVTGEEEIDGRLIQKNDVIKIVPGAKVASDGYVIWGQSHVNESMITGEARPVAKRKGDTVIGGTLNENGVLHVKVTRVGSESALAQIVRLVESAQLAKAPVQKLADRISKFFVPLVIFLSFSTWLAWFLAGKLHWYPESWIPSSMDSFELALQFGISVMVIACPCALGLATPTAVMVGTGVGASQGVLIKGGQALERAHKVNCIVFDKTGTLTMGKPVVVKTKLLKNMVLREFYELVAATEVNSEHPLAKAIVEYAKKFRDDEENPAWPEACDFVSITGKGVKATVKGREIMVGNKNLMNDHKVIIPDDAEELLADSEDMAQTGILVSINSELIGVLSVSDPLKPSAREAISILKSMNIKSIMVTGDNWGTANSIAREVGIDSVIAEAKPEQKAEKVKELQAAGHVVAMVGDGINDSPALVAADVGMAIGAGTDIAIEAADIVLMKSNLEDVITAIDLSRKTFSRIRLNYVWALGYNLMGIPIAAGVLFPGTRFRLPPWIAGAAMAASSVSVVCCSLLLKNYKRPKKLDHLEIREIQVERV.

The Cytoplasmic segment spans residues M1–S299. 2 consecutive HMA domains span residues S51–S117 and Q129–V195. Cu(+) is bound by residues C62, C65, C140, and C143. Positions S204 to S270 constitute an HMA 3; degenerate domain. The helical transmembrane segment at F300–P321 threads the bilayer. Over G322–I340 the chain is Extracellular. Residues I341 to G360 form a helical membrane-spanning segment. At S361 to R367 the chain is on the cytoplasmic side. A helical transmembrane segment spans residues G368 to L388. Residues Y389 to F406 are Extracellular-facing. A helical transmembrane segment spans residues E407–K427. Topologically, residues G428–R561 are cytoplasmic. Residues I562–A584 traverse the membrane as a helical segment. Over G585–A605 the chain is Extracellular. A helical membrane pass occupies residues L606–L623. The Cytoplasmic segment spans residues A624–I920. Catalysis depends on D661, which acts as the 4-aspartylphosphate intermediate. Residues D866 and D870 each coordinate Mg(2+). The helical transmembrane segment at R921–G940 threads the bilayer. Topologically, residues V941 to P952 are extracellular. The chain crosses the membrane as a helical span at residues W953–L971. The Cytoplasmic portion of the chain corresponds to L972–V995.

Belongs to the cation transport ATPase (P-type) (TC 3.A.3) family. Type IB subfamily. As to quaternary structure, interacts with ATX1. As to expression, expressed in roots and flowers.

It is found in the membrane. It catalyses the reaction Cu(+)(in) + ATP + H2O = Cu(+)(out) + ADP + phosphate + H(+). In terms of biological role, involved in copper import into the cell. May play a role in copper detoxification in roots. This is Probable copper-transporting ATPase HMA5 (HMA5) from Arabidopsis thaliana (Mouse-ear cress).